The primary structure comprises 48 residues: Large ribosomal subunit protein bL33A (48 aa).

The protein belongs to the bacterial ribosomal protein bL33 family.

In Shouchella clausii (strain KSM-K16) (Alkalihalobacillus clausii), this protein is Large ribosomal subunit protein bL33A.